Consider the following 276-residue polypeptide: Rhomboid protease GlpG (276 aa).

6 consecutive transmembrane segments (helical) span residues 94–114 (GPVT…MSLI), 142–162 (IFMH…WYLG), 169–189 (LGSG…GYVQ), 192–212 (FSGP…GYVW), 229–249 (LIIF…GMSM), and 250–270 (ANGA…VDTL). The Nucleophile role is filled by S201. The active site involves H254.

Belongs to the peptidase S54 family.

The protein localises to the cell inner membrane. It carries out the reaction Cleaves type-1 transmembrane domains using a catalytic dyad composed of serine and histidine that are contributed by different transmembrane domains.. Functionally, rhomboid-type serine protease that catalyzes intramembrane proteolysis. The protein is Rhomboid protease GlpG of Salmonella choleraesuis (strain SC-B67).